Reading from the N-terminus, the 1399-residue chain is MKDLLNLLKNQGQVEEFDAIRIGLASPEMIRSWSFGEVKKPETINYRTFKPERDGLFCAKIFGPVKDYECLCGKYKRLKHRGVICEKCGVEVALAKVRRERMAHIELASPVAHIWFLKSLPSRIGLLMDMTLRDIERVLYFESYVVIDPGMTTLEKGQLLNDEQYFEALEEFGDDFDARMGAEAVRELLHAIDLEHEIGRLREEIPQTNSETKIKKLSKRLKLMEAFQGSGNLPEWMVLTVLPVLPPDLRPLVPLDGGRFATSDLNDLYRRVINRNNRLKRLLDLSAPDIIVRNEKRMLQEAVDALLDNGRRGRAITGSNKRPLKSLADMIKGKQGRFRQNLLGKRVDYSGRSVITVGPTLRLHQCGLPKKMALELFKPFIFGKLEMRGLATTIKAAKKMVERELPEVWDVLAEVIREHPVLLNRAPTLHRLGIQAFEPVLIEGKAIQLHPLVCAAYNADFDGDQMAVHVPLTLEAQLEARALMMSTNNILSPANGEPIIVPSQDVVLGLYYMTREAINAKGEGRVFADLQEVDRVFRAGEAALHAKIKVRINETVKERDGSVVKNTRIVDTTVGRALLFQVVPAGLPYDVVNQPMKKKAISKLINQCYRVVGLKETVIFADQLMYTGFAYSTISGVSIGVNDFVIPDEKARIIGNATDEVKEIESQYASGLVTQGEKYNKVIDLWSKANDEVSKAMMANLSKEKVIDREGKEVEQESFNSMYMMADSGARGSAAQIRQLAGMRGLMAKPDGSIIETPITANFREGLSVLQYFISTHGARKGLADTALKTANSGYLTRRLVDVAQDLVVTEIDCGTDQGLVMTPHIEGGDVVEPLGERVLGRVIARDVFKPGTEDVIVPAGTLVDEQWVEFIELNSIDEVIVRSPINCETRYGICAKCYGRDLARGHQVNIGEAVGVIAAQSIGEPGTQLTMRTFHIGGAASRTSAADSVQVKNGGMVRLHNLKQVERADGNLVAVSRSGELAIADEFGRERERYKLPYGAVISVKEGEKVEAGAIVAKWDPHTHPIVTELKGTVTFVGMEENITIKRQTDELTGLTNIEVLDVKDRPAAGKEIRPAIKMVDASGKDLYLPGTDVPAQYFLPANALVGVADGAQIGVGDVIARIPQETSKTRDITGGLPRVADLFEARRPKEASILAEVSGTIAFGKETKGKRRLVITPTDGSDPYEELIPKWRHLNVFEGEQVNRGEVISDGPSDPHDILRLLGVSALAKYIVNEIQDVYRLQGVKINDKHIETILRQMLRKVEISESGDSSFIKGDQMELTQVLVENERLAGEDKFISKFTRVLLGITKASLSTESFISAASFQETTRVLTEAAVTGKRDYLRGLKENVVVGRLIPAGTGLAYHSERKRRRDADKPLRVSASEVEAALTEALNSSGN.

Zn(2+) contacts are provided by cysteine 70, cysteine 72, cysteine 85, and cysteine 88. Mg(2+) is bound by residues aspartate 460, aspartate 462, and aspartate 464. Positions 814, 888, 895, and 898 each coordinate Zn(2+).

It belongs to the RNA polymerase beta' chain family. In terms of assembly, the RNAP catalytic core consists of 2 alpha, 1 beta, 1 beta' and 1 omega subunit. When a sigma factor is associated with the core the holoenzyme is formed, which can initiate transcription. It depends on Mg(2+) as a cofactor. Zn(2+) serves as cofactor.

It carries out the reaction RNA(n) + a ribonucleoside 5'-triphosphate = RNA(n+1) + diphosphate. Functionally, DNA-dependent RNA polymerase catalyzes the transcription of DNA into RNA using the four ribonucleoside triphosphates as substrates. The chain is DNA-directed RNA polymerase subunit beta' from Pseudomonas putida (strain ATCC 700007 / DSM 6899 / JCM 31910 / BCRC 17059 / LMG 24140 / F1).